The primary structure comprises 269 residues: Diaminopimelate epimerase (269 aa).

Residues Asn-13, Gln-47, and Asn-65 each coordinate substrate. The Proton donor role is filled by Cys-74. Residues 75 to 76 (GN), Asn-149, Asn-182, and 200 to 201 (ER) each bind substrate. Cys-209 acts as the Proton acceptor in catalysis. 210 to 211 (GT) is a substrate binding site.

This sequence belongs to the diaminopimelate epimerase family. In terms of assembly, homodimer.

The protein localises to the cytoplasm. It catalyses the reaction (2S,6S)-2,6-diaminopimelate = meso-2,6-diaminopimelate. It functions in the pathway amino-acid biosynthesis; L-lysine biosynthesis via DAP pathway; DL-2,6-diaminopimelate from LL-2,6-diaminopimelate: step 1/1. Its function is as follows. Catalyzes the stereoinversion of LL-2,6-diaminopimelate (L,L-DAP) to meso-diaminopimelate (meso-DAP), a precursor of L-lysine and an essential component of the bacterial peptidoglycan. The polypeptide is Diaminopimelate epimerase (Erythrobacter litoralis (strain HTCC2594)).